Here is a 508-residue protein sequence, read N- to C-terminus: Protein DETOXIFICATION 52 (508 aa).

12 consecutive transmembrane segments (helical) span residues 48–68 (ILAALILYARSAISMLFLGHI), 78–98 (LAIAFANITGYSVLAGLALGM), 122–142 (VLFLLTSSVVIVALWLNLGKI), 156–176 (AQTYILCSIPDLLTNSFLHPL), 189–209 (LTLATLAGTIFHIPMNFFLVS), 222–242 (AAASNLLVVIFLVAHVWIAGL), 270–290 (IGVCLEWWWYEIMTVLCGLLI), 300–320 (GILIQTTSLLYIFPSSLGLAV), 341–361 (IVAVSFAGVMGLTASAFAWGV), 368–388 (IFTNDVAIIKLTAAALPILGL), 415–437 (INLGAFYLVGTPVAVGLTFWAAY), and 441–463 (GLWVGLLAAQICCAAMMLYVVAT).

It belongs to the multi antimicrobial extrusion (MATE) (TC 2.A.66.1) family. As to expression, detected in the part of the veins in cotyledons of 6-day-old seedlings and the basal parts of the petioles in older plants. Highly expressed in the vascular tissues of hypocotyl in dark-grown seedlings.

The protein localises to the late endosome membrane. May act as a negative regulator of hypocotyl cell elongation in the light. The polypeptide is Protein DETOXIFICATION 52 (Arabidopsis thaliana (Mouse-ear cress)).